The primary structure comprises 203 residues: Proteasome subunit beta 2 (203 aa).

A propeptide spans 1–9 (MGEEVSIGA) (removed in mature form; by autocatalysis). T10 serves as the catalytic Nucleophile.

This sequence belongs to the peptidase T1B family. In terms of assembly, the 20S proteasome core is composed of 14 alpha and 14 beta subunits that assemble into four stacked heptameric rings, resulting in a barrel-shaped structure. The two inner rings, each composed of seven catalytic beta subunits, are sandwiched by two outer rings, each composed of seven alpha subunits. The catalytic chamber with the active sites is on the inside of the barrel. Has a gated structure, the ends of the cylinder being occluded by the N-termini of the alpha-subunits. Is capped at one or both ends by the proteasome regulatory ATPase, PAN.

The protein resides in the cytoplasm. The enzyme catalyses Cleavage of peptide bonds with very broad specificity.. The formation of the proteasomal ATPase PAN-20S proteasome complex, via the docking of the C-termini of PAN into the intersubunit pockets in the alpha-rings, triggers opening of the gate for substrate entry. Interconversion between the open-gate and close-gate conformations leads to a dynamic regulation of the 20S proteasome proteolysis activity. Its function is as follows. Component of the proteasome core, a large protease complex with broad specificity involved in protein degradation. This is Proteasome subunit beta 2 from Pyrobaculum calidifontis (strain DSM 21063 / JCM 11548 / VA1).